We begin with the raw amino-acid sequence, 512 residues long: Podocan-like protein 1 (512 aa).

An N-terminal signal peptide occupies residues Met-1–Gly-26. Residues Glu-37–Arg-74 form the LRRNT domain. N-linked (GlcNAc...) asparagine glycosylation occurs at Asn-71. LRR repeat units lie at residues Ala-75 to Arg-96, Gly-99 to Ala-119, Gln-125 to Ser-146, Leu-147 to Glu-167, Ala-170 to Gly-193, Ala-196 to Pro-216, Ser-217 to Arg-238, Gln-241 to Thr-261, Ser-267 to Thr-288, Leu-289 to Gly-309, Gly-312 to Ala-332, Gly-338 to Arg-359, Leu-360 to Ala-380, Gly-383 to Ser-396, Ala-409 to Gly-430, Leu-431 to Gly-451, and Gln-454 to Thr-474.

This sequence belongs to the small leucine-rich proteoglycan (SLRP) family. SLRP class V subfamily. In terms of processing, N-glycosylated.

The protein localises to the secreted. The protein resides in the extracellular space. It localises to the extracellular matrix. In Homo sapiens (Human), this protein is Podocan-like protein 1 (PODNL1).